The sequence spans 89 residues: N.vectensis toxin 7 (89 aa).

The signal sequence occupies residues 1–21 (MASFFKIAVICLVMLVVCSNA). Cystine bridges form between C44-C77, C46-C69, and C62-C78.

As to expression, expressed in ectodermal gland cells.

Functionally, probable toxin. The sequence is that of N.vectensis toxin 7 from Nematostella vectensis (Starlet sea anemone).